A 254-amino-acid chain; its full sequence is Small ribosomal subunit protein uS3 (254 aa).

The 71-residue stretch at 39-109 folds into the KH type-2 domain; that stretch reads IRNYISARLK…EVKIDVIEVI (71 aa). The disordered stretch occupies residues 220 to 254; that stretch reads EEMKKMQERRNDSRGRGRGDGRGAKRRRRPAAKKA. Residues 221–242 show a composition bias toward basic and acidic residues; that stretch reads EMKKMQERRNDSRGRGRGDGRG. The span at 243–254 shows a compositional bias: basic residues; it reads AKRRRRPAAKKA.

The protein belongs to the universal ribosomal protein uS3 family. As to quaternary structure, part of the 30S ribosomal subunit. Forms a tight complex with proteins S10 and S14.

Binds the lower part of the 30S subunit head. Binds mRNA in the 70S ribosome, positioning it for translation. The protein is Small ribosomal subunit protein uS3 of Chlorobaculum parvum (strain DSM 263 / NCIMB 8327) (Chlorobium vibrioforme subsp. thiosulfatophilum).